The primary structure comprises 178 residues: Thymidine kinase (178 aa).

13-20 is a binding site for ATP; sequence GPMFAGKS. Glu-85 acts as the Proton acceptor in catalysis. A substrate-binding site is contributed by Phe-115. Cys-140 and Cys-143 together coordinate Zn(2+). 159 to 163 serves as a coordination point for substrate; it reads IEVIG. Cys-172 and Cys-175 together coordinate Zn(2+).

This sequence belongs to the thymidine kinase family.

It catalyses the reaction thymidine + ATP = dTMP + ADP + H(+). The protein is Thymidine kinase (TK) of Oryctolagus cuniculus (Rabbit).